The chain runs to 558 residues: Hsp70-Hsp90 organizing protein 3 (558 aa).

TPR repeat units follow at residues 2-35, 37-69, 70-103, and 136-173; these read AEEA…SPTN, ILYS…KPDW, SKGY…DPSN, and EKLT…YMKD. An STI1 1 domain is found at 131–170; that stretch reads GKEMWEKLTADPGTRVYLEQDDFVKTMKEIQRNPNNLNLY. The disordered stretch occupies residues 191–232; it reads SSGEDTEMKEADERKEPEPEMEPMELTEEERQKKERKEKALK. Residues 196–208 show a composition bias toward basic and acidic residues; it reads TEMKEADERKEPE. Residues 209–218 show a composition bias toward acidic residues; the sequence is PEMEPMELTE. Basic and acidic residues predominate over residues 219–232; it reads EERQKKERKEKALK. The Bipartite nuclear localization signal motif lies at 227 to 244; it reads KEKALKEKGEGNVAYKKK. TPR repeat units follow at residues 230 to 263, 265 to 297, 305 to 342, 369 to 402, 404 to 436, and 437 to 470; these read ALKE…DDED, SYLT…GREL, ARAL…HRNP, AEEE…NPND, RAYS…DPSF, and TKGY…DPKN. An STI1 2 domain is found at 507-546; that stretch reads DPEVQNILSDPVMRQVLVDFQENPKAAQEHMKNPMVMNKI.

As to quaternary structure, co-chaperone that forms a complex with HSP70 and HSP90 and preproteins (e.g. chloroplast preproteins). In terms of processing, phosphorylated. Acetylated.

The protein resides in the cytoplasm. It localises to the nucleus. Mediates the association of the molecular chaperones HSP70 and HSP90. Mediates nuclear encoded chloroplast preproteins binding to HSP90 prior to chloroplastic sorting. Involved in acclimation to heat. The polypeptide is Hsp70-Hsp90 organizing protein 3 (HOP3) (Arabidopsis thaliana (Mouse-ear cress)).